We begin with the raw amino-acid sequence, 385 residues long: Heterogeneous nuclear ribonucleoprotein 87F (385 aa).

2 consecutive RRM domains span residues 24 to 101 (RKLF…RAVP) and 115 to 192 (KKLF…KAIA). 2 disordered regions span residues 192–289 (AKQD…WNGG) and 305–385 (GNGG…NRRY). Gly residues-rich tracts occupy residues 199-289 (QGGG…WNGG) and 305-317 (GNGG…GGFG). Polar residues predominate over residues 319-336 (EYQQSYGGGPQRNSNFGN). Gly residues-rich tracts occupy residues 344–362 (QGGG…GQGF) and 369–385 (TGGG…NRRY).

It localises to the nucleus. It is found in the cytoplasm. In terms of biological role, this protein is a component of ribonucleosomes. Could be needed to organize a concentration gradient of a dorsalizing morphogen (Dm) originating in the germinal vesicle. The polypeptide is Heterogeneous nuclear ribonucleoprotein 87F (Hrb87F) (Drosophila melanogaster (Fruit fly)).